The primary structure comprises 176 residues: MVKYSQEPDNITKSCKARGADLRVHFKNTRETAHAIRKLPLNKAKRYLEDVIAHKQAIPFTRFCRGVGRTAQAKNRHSNGQGRWPAKSAQFVLDLLKNAESNAEVKGLDVDALFISHIQVNQAAKQRRRTYRAHGRINPYMSNPCHIELILSEKEEPVKKEPETQLAAKSKKGASS.

Positions 154–163 are enriched in basic and acidic residues; that stretch reads KEEPVKKEPE. The segment at 154 to 176 is disordered; it reads KEEPVKKEPETQLAAKSKKGASS.

It belongs to the universal ribosomal protein uL22 family.

In Arabidopsis thaliana (Mouse-ear cress), this protein is Large ribosomal subunit protein uL22z (RPL17A).